The primary structure comprises 427 residues: Chaperone SurA (427 aa).

Residues 1–19 form the signal peptide; that stretch reads MKIWKSILFTTLLSCGAVA. PpiC domains follow at residues 170–268 and 277–377; these read TVQY…KIED and VTEV…EVLD.

The protein resides in the periplasm. It catalyses the reaction [protein]-peptidylproline (omega=180) = [protein]-peptidylproline (omega=0). In terms of biological role, chaperone involved in the correct folding and assembly of outer membrane proteins. Recognizes specific patterns of aromatic residues and the orientation of their side chains, which are found more frequently in integral outer membrane proteins. May act in both early periplasmic and late outer membrane-associated steps of protein maturation. In Vibrio parahaemolyticus serotype O3:K6 (strain RIMD 2210633), this protein is Chaperone SurA.